A 160-amino-acid chain; its full sequence is Nucleotide-binding protein CJA_2652 (160 aa).

This sequence belongs to the YajQ family.

Functionally, nucleotide-binding protein. This chain is Nucleotide-binding protein CJA_2652, found in Cellvibrio japonicus (strain Ueda107) (Pseudomonas fluorescens subsp. cellulosa).